The primary structure comprises 400 residues: NADH-ubiquinone oxidoreductase 49 kDa subunit (400 aa).

The protein belongs to the complex I 49 kDa subunit family.

The protein resides in the mitochondrion. It carries out the reaction a ubiquinone + NADH + 5 H(+)(in) = a ubiquinol + NAD(+) + 4 H(+)(out). Functionally, core subunit of the mitochondrial membrane respiratory chain NADH dehydrogenase (Complex I) that is believed to belong to the minimal assembly required for catalysis. Complex I functions in the transfer of electrons from NADH to the respiratory chain. The immediate electron acceptor for the enzyme is believed to be ubiquinone. Component of the iron-sulfur (IP) fragment of the enzyme. Component of the iron-sulfur (IP) fragment of the enzyme. The sequence is that of NADH-ubiquinone oxidoreductase 49 kDa subunit (NAD7) from Prototheca wickerhamii.